A 461-amino-acid polypeptide reads, in one-letter code: Phosphoglucosamine mutase (461 aa).

Ser118 acts as the Phosphoserine intermediate in catalysis. Residues Ser118, Asp255, Asp257, and Asp259 each contribute to the Mg(2+) site. Residue Ser118 is modified to Phosphoserine.

The protein belongs to the phosphohexose mutase family. It depends on Mg(2+) as a cofactor. In terms of processing, activated by phosphorylation.

It catalyses the reaction alpha-D-glucosamine 1-phosphate = D-glucosamine 6-phosphate. Catalyzes the conversion of glucosamine-6-phosphate to glucosamine-1-phosphate. This Acidothermus cellulolyticus (strain ATCC 43068 / DSM 8971 / 11B) protein is Phosphoglucosamine mutase.